The chain runs to 214 residues: Small ribosomal subunit protein uS5 (214 aa).

The region spanning Met54 to Val117 is the S5 DRBM domain.

Belongs to the universal ribosomal protein uS5 family. In terms of assembly, part of the 30S ribosomal subunit. Contacts protein S4.

With S4 and S12 plays an important role in translational accuracy. In Metallosphaera sedula (strain ATCC 51363 / DSM 5348 / JCM 9185 / NBRC 15509 / TH2), this protein is Small ribosomal subunit protein uS5.